The chain runs to 315 residues: Cobalamin biosynthesis protein CobD (315 aa).

Helical transmembrane passes span I48–Q70, L75–I94, L148–Y170, I208–I230, and L292–F314.

It belongs to the CobD/CbiB family.

The protein localises to the cell membrane. The protein operates within cofactor biosynthesis; adenosylcobalamin biosynthesis. In terms of biological role, converts cobyric acid to cobinamide by the addition of aminopropanol on the F carboxylic group. The sequence is that of Cobalamin biosynthesis protein CobD from Leptospira interrogans serogroup Icterohaemorrhagiae serovar copenhageni (strain Fiocruz L1-130).